Here is a 552-residue protein sequence, read N- to C-terminus: Alcohol dehydrogenase [acceptor] (552 aa).

3–32 (DYIIVGAGSAGCVLANRLSADPSKRVCLLE) contributes to the FAD binding site. His469 (proton acceptor) is an active-site residue.

It belongs to the GMC oxidoreductase family. Requires FAD as cofactor.

The protein localises to the cell inner membrane. The enzyme catalyses a primary alcohol + A = an aldehyde + AH2. Converts aliphatic medium-chain-length alcohols into aldehydes. May be linked to the electron transfer chain. The protein is Alcohol dehydrogenase [acceptor] (alkJ) of Pseudomonas putida (Arthrobacter siderocapsulatus).